We begin with the raw amino-acid sequence, 467 residues long: Tubulointerstitial nephritis antigen-like (467 aa).

The signal sequence occupies residues 1 to 21 (MWRCPLGLLLLLPLAGHLALG). The region spanning 50 to 98 (EQDLCCRGRADDCALPYLGAICYCDLFCNRTVSDCCPDFWDFCLGVPPP) is the SMB domain. 5 disulfide bridges follow: Cys54–Cys73, Cys71–Cys73, Cys71–Cys85, Cys77–Cys84, and Cys85–Cys92. The N-linked (GlcNAc...) asparagine glycan is linked to Asn78. N-linked (GlcNAc...) asparagine glycosylation is present at Asn161.

The protein belongs to the peptidase C1 family. In terms of processing, glycosylated. Highly expressed in aorta, heart, placenta, kidney and a colorectal adenocarcinoma cell line. Moderately expressed in skeletal muscle, pancreas, lung, lymph nodes, adrenal gland, bone marrow and thyroid. Weakly expressed in colon, small intestine, ovary, spleen, testis and prostate. Predominantly found in vascular smooth muscle cells, but also in cardiac and skeletal muscle cells as well as kidney.

The protein resides in the secreted. May be implicated in the adrenocortical zonation and in mechanisms for repressing the CYP11B1 gene expression in adrenocortical cells. This is a non catalytic peptidase C1 family protein. The sequence is that of Tubulointerstitial nephritis antigen-like (TINAGL1) from Homo sapiens (Human).